Reading from the N-terminus, the 1150-residue chain is uncharacterized protein (1150 aa).

It belongs to the TMEM1 family.

This is an uncharacterized protein from Schizosaccharomyces pombe (strain 972 / ATCC 24843) (Fission yeast).